The sequence spans 315 residues: tRNA wybutosine-synthesizing protein 5 (315 aa).

Residues Asp102–Lys267 form the JmjC domain. A 2-oxoglutarate-binding site is contributed by Tyr106. Residues His160 and Asp162 each contribute to the Fe cation site. Asn166 and Lys175 together coordinate 2-oxoglutarate. Position 235 (His235) interacts with Fe cation.

It belongs to the TYW5 family. As to quaternary structure, homodimer. It depends on Fe(2+) as a cofactor.

It carries out the reaction 7-[(3S)-3-amino-3-carboxypropyl]wyosine(37) in tRNA(Phe) + 2-oxoglutarate + O2 = 7-(2-hydroxy-3-amino-3-carboxypropyl)wyosine(37) in tRNA(Phe) + succinate + CO2. Its pathway is tRNA modification; wybutosine-tRNA(Phe) biosynthesis. Its function is as follows. tRNA hydroxylase that acts as a component of the wybutosine biosynthesis pathway. Wybutosine is a hyper modified guanosine with a tricyclic base found at the 3'-position adjacent to the anticodon of eukaryotic phenylalanine tRNA. Catalyzes the hydroxylation of 7-(a-amino-a-carboxypropyl)wyosine (yW-72) into undermodified hydroxywybutosine (OHyW*). OHyW* being further transformed into hydroxywybutosine (OHyW) by LCMT2/TYW4. OHyW is a derivative of wybutosine found in higher eukaryotes. This is tRNA wybutosine-synthesizing protein 5 (TYW5) from Homo sapiens (Human).